Reading from the N-terminus, the 959-residue chain is Lon protease homolog, mitochondrial (959 aa).

A mitochondrion-targeting transit peptide spans 1 to 67 (MAASTGYVRL…GPAIGGQWRG (67 aa)). Disordered regions lie at residues 77 to 102 (GAFSGGEDASEGGAEEGAGGAGGSAG) and 218 to 257 (RQLEVEPEEPEAENKHKPRRKSKRGKKEAEDELSARHPAE). Positions 91–102 (EEGAGGAGGSAG) are enriched in gly residues. One can recognise a Lon N-terminal domain in the interval 124–370 (LPLIAITRNP…KALSLLKKEF (247 aa)). The segment covering 233 to 243 (HKPRRKSKRGK) has biased composition (basic residues). Over residues 244-256 (KEAEDELSARHPA) the composition is skewed to basic and acidic residues. 523-530 (GPPGVGKT) contributes to the ATP binding site. The Lon proteolytic domain maps to 759–949 (VTPPGVVMGL…REIFDIAFPD (191 aa)). Catalysis depends on residues serine 855 and lysine 898.

Belongs to the peptidase S16 family. Homohexamer. Organized in a ring with a central cavity. The ATP-binding and proteolytic domains (AP-domain) form a hexameric chamber, while the N-terminal domain is arranged as a trimer of dimers. DNA and RNA binding is stimulated by substrate and inhibited by ATP binding. Interacts with TWNK and mitochondrial DNA polymerase subunit POLG. Duodenum, heart, lung and liver, but not thymus.

The protein resides in the mitochondrion matrix. It carries out the reaction Hydrolysis of proteins in presence of ATP.. Its activity is regulated as follows. Peptidase activity is subject to substrate inhibition by ATP. Functionally, ATP-dependent serine protease that mediates the selective degradation of misfolded, unassembled or oxidatively damaged polypeptides as well as certain short-lived regulatory proteins in the mitochondrial matrix. Endogenous substrates include mitochondrial steroidogenic acute regulatory (StAR) protein, DELE1, helicase Twinkle (TWNK) and the large ribosomal subunit protein MRPL32/bL32m. MRPL32/bL32m is protected from degradation by LONP1 when it is bound to a nucleic acid (RNA), but TWNK is not. May also have a chaperone function in the assembly of inner membrane protein complexes. Participates in the regulation of mitochondrial gene expression and in the maintenance of the integrity of the mitochondrial genome. Binds to mitochondrial promoters and RNA in a single-stranded, site-specific, and strand-specific manner. May regulate mitochondrial DNA replication and/or gene expression using site-specific, single-stranded DNA binding to target the degradation of regulatory proteins binding to adjacent sites in mitochondrial promoters. The chain is Lon protease homolog, mitochondrial from Homo sapiens (Human).